The following is a 162-amino-acid chain: Interleukin-15 (162 aa).

Residues 1–29 (MRISKPYLRSTSIQCYLCLLLNSHFLAEA) form the signal peptide. Residues 30–48 (GIHVFIFGCISAGLPKTEA) constitute a propeptide that is removed on maturation. Disulfide bonds link Cys83/Cys133 and Cys90/Cys136. Residues Asn108, Asn119, Asn127, and Asn143 are each glycosylated (N-linked (GlcNAc...) asparagine).

Belongs to the IL-15/IL-21 family. Expressed in many tissues including heart, spleen, lung, liver, muscle and kidney (at mRNA level). Expressed in many tissues including heart, spleen, lung, liver, muscle and kidney (at protein level).

The protein localises to the secreted. Functionally, cytokine that plays a major role in the development of inflammatory and protective immune responses to microbial invaders and parasites by modulating immune cells of both the innate and adaptive immune systems. Stimulates the proliferation of natural killer cells, T-cells and B-cells and promotes the secretion of several cytokines. In monocytes, induces the production of IL8 and monocyte chemotactic protein 1/CCL2, two chemokines that attract neutrophils and monocytes respectively to sites of infection. Unlike most cytokines, which are secreted in soluble form, IL15 is expressed in association with its high affinity IL15RA on the surface of IL15-producing cells and delivers signals to target cells that express IL2RB and IL2RG receptor subunits. Binding to its receptor triggers the phosphorylation of JAK1 and JAK3 and the recruitment and subsequent phosphorylation of signal transducer and activator of transcription-3/STAT3 and STAT5. In mast cells, induces the rapid tyrosine phosphorylation of STAT6 and thereby controls mast cell survival and release of cytokines such as IL4. In Oryctolagus cuniculus (Rabbit), this protein is Interleukin-15 (IL15).